Here is a 379-residue protein sequence, read N- to C-terminus: Queuine tRNA-ribosyltransferase (379 aa).

Catalysis depends on Asp94, which acts as the Proton acceptor. Substrate contacts are provided by residues 94–98, Asp148, Gln191, and Gly218; that span reads DSGGF. The interval 249–255 is RNA binding; the sequence is GVGSPDS. The active-site Nucleophile is the Asp268. The RNA binding; important for wobble base 34 recognition stretch occupies residues 273-277; that stretch reads TRIAR. Residues Cys306, Cys308, Cys311, and His337 each contribute to the Zn(2+) site.

This sequence belongs to the queuine tRNA-ribosyltransferase family. In terms of assembly, homodimer. Within each dimer, one monomer is responsible for RNA recognition and catalysis, while the other monomer binds to the replacement base PreQ1. Zn(2+) is required as a cofactor.

It catalyses the reaction 7-aminomethyl-7-carbaguanine + guanosine(34) in tRNA = 7-aminomethyl-7-carbaguanosine(34) in tRNA + guanine. It functions in the pathway tRNA modification; tRNA-queuosine biosynthesis. Catalyzes the base-exchange of a guanine (G) residue with the queuine precursor 7-aminomethyl-7-deazaguanine (PreQ1) at position 34 (anticodon wobble position) in tRNAs with GU(N) anticodons (tRNA-Asp, -Asn, -His and -Tyr). Catalysis occurs through a double-displacement mechanism. The nucleophile active site attacks the C1' of nucleotide 34 to detach the guanine base from the RNA, forming a covalent enzyme-RNA intermediate. The proton acceptor active site deprotonates the incoming PreQ1, allowing a nucleophilic attack on the C1' of the ribose to form the product. After dissociation, two additional enzymatic reactions on the tRNA convert PreQ1 to queuine (Q), resulting in the hypermodified nucleoside queuosine (7-(((4,5-cis-dihydroxy-2-cyclopenten-1-yl)amino)methyl)-7-deazaguanosine). In Halalkalibacterium halodurans (strain ATCC BAA-125 / DSM 18197 / FERM 7344 / JCM 9153 / C-125) (Bacillus halodurans), this protein is Queuine tRNA-ribosyltransferase.